The sequence spans 79 residues: ATP synthase subunit c (79 aa).

2 helical membrane-spanning segments follow: residues 11 to 31 (MAAA…IGIL) and 53 to 73 (FFIV…LGLY).

This sequence belongs to the ATPase C chain family. F-type ATPases have 2 components, F(1) - the catalytic core - and F(0) - the membrane proton channel. F(1) has five subunits: alpha(3), beta(3), gamma(1), delta(1), epsilon(1). F(0) has three main subunits: a(1), b(2) and c(10-14). The alpha and beta chains form an alternating ring which encloses part of the gamma chain. F(1) is attached to F(0) by a central stalk formed by the gamma and epsilon chains, while a peripheral stalk is formed by the delta and b chains.

It localises to the cell inner membrane. In terms of biological role, f(1)F(0) ATP synthase produces ATP from ADP in the presence of a proton or sodium gradient. F-type ATPases consist of two structural domains, F(1) containing the extramembraneous catalytic core and F(0) containing the membrane proton channel, linked together by a central stalk and a peripheral stalk. During catalysis, ATP synthesis in the catalytic domain of F(1) is coupled via a rotary mechanism of the central stalk subunits to proton translocation. Functionally, key component of the F(0) channel; it plays a direct role in translocation across the membrane. A homomeric c-ring of between 10-14 subunits forms the central stalk rotor element with the F(1) delta and epsilon subunits. The protein is ATP synthase subunit c of Citrobacter koseri (strain ATCC BAA-895 / CDC 4225-83 / SGSC4696).